The primary structure comprises 401 residues: S-adenosylmethionine synthase (401 aa).

ATP is bound at residue 135–140; it reads GHGSGD.

Belongs to the AdoMet synthase 2 family. It depends on Mg(2+) as a cofactor.

It carries out the reaction L-methionine + ATP + H2O = S-adenosyl-L-methionine + phosphate + diphosphate. It functions in the pathway amino-acid biosynthesis; S-adenosyl-L-methionine biosynthesis; S-adenosyl-L-methionine from L-methionine: step 1/1. Functionally, catalyzes the formation of S-adenosylmethionine from methionine and ATP. The chain is S-adenosylmethionine synthase (mat) from Methanothermobacter marburgensis (strain ATCC BAA-927 / DSM 2133 / JCM 14651 / NBRC 100331 / OCM 82 / Marburg) (Methanobacterium thermoautotrophicum).